Here is a 477-residue protein sequence, read N- to C-terminus: MSKAKDKAIVSAAQASTAYSQIDSFSHLYDRGGNLTINGKPSYTVDQAATQLLRDGAAYRDFDGNGKIDLTYTFLTSASSSTMNKHGISGFSQFNAQQKAQAALAMQSWSDVANVTFTEKASGGDGHMTFGNYSSGQDGAAAFAYLPGTGAGYDGTSWYLTNNSYTPNKTPDLNNYGRQTLTHEIGHTLGLAHPGDYNAGEGAPTYNDATYGQDTRGYSLMSYWSESNTNQNFSKGGVEAYASGPLIDDIAAIQKLYGANYNTRAGDTTYGFNSNTGRDFLSATSNADKLVFSVWDGGGNDTLDFSGFTQNQKINLNEASFSDVGGLVGNVSIAKGVTIENAFGGAGNDLIIGNNAANVIKGGAGNDLIYGAGGADQLWGGAGNDTFVFGASSDSKPGAADKIFDFTSGSDKIDLSGITKGAGLTFVNAFTGHAGDAVLTYAAGTNLGTLAVDFSGHGVADFLVTTVGQAAVSDIVA.

Residues 1–20 (MSKAKDKAIVSAAQASTAYS) form the signal peptide. Zn(2+) is bound at residue His-183. Glu-184 is a catalytic residue. Positions 187 and 193 each coordinate Zn(2+). Ca(2+) contacts are provided by Arg-264, Gly-266, Thr-268, Asp-296, Gly-298, Gly-299, Asp-301, Thr-338, Glu-340, Gly-345, Gly-347, Asp-349, Asn-354, Ala-356, Asn-358, Gly-362, Gly-363, Ala-364, Gly-365, Asp-367, Gly-371, Ala-372, Gly-373, Gly-374, Asp-376, Gly-380, Gly-381, Ala-382, Gly-383, Asp-385, Asp-394, Asp-401, Asp-411, Asp-453, Ser-455, and Asp-461. Hemolysin-type calcium-binding repeat units lie at residues 343 to 360 (FGGA…ANVI), 361 to 378 (KGGA…ADQL), and 379 to 391 (WGGA…VFGA).

The protein belongs to the peptidase M10B family. The cofactor is Ca(2+). Requires Zn(2+) as cofactor.

The protein localises to the secreted. Its activity is regulated as follows. Is completely inhibited by the metal cation chelators 1,10-phenanthroline and EDTA, but PMSF, pepstatin A and E-64 have no effect on activity. Its function is as follows. Peptidase able to cleave azocasein and the milk substrates beta-casein and Na-caseinate. Can withstand UHT processing of milk, and is able to spoil UHT milk over the storage period. This chain is Metallopeptidase AprA, found in Pseudomonas marginalis (Pseudomonas panacis).